The sequence spans 317 residues: Acetyl-coenzyme A carboxylase carboxyl transferase subunit alpha (317 aa).

Residues 40 to 293 (LEGRVRDAMV…EAVIGDALKE (254 aa)) enclose the CoA carboxyltransferase C-terminal domain.

The protein belongs to the AccA family. As to quaternary structure, acetyl-CoA carboxylase is a heterohexamer composed of biotin carboxyl carrier protein (AccB), biotin carboxylase (AccC) and two subunits each of ACCase subunit alpha (AccA) and ACCase subunit beta (AccD).

The protein localises to the cytoplasm. It carries out the reaction N(6)-carboxybiotinyl-L-lysyl-[protein] + acetyl-CoA = N(6)-biotinyl-L-lysyl-[protein] + malonyl-CoA. It participates in lipid metabolism; malonyl-CoA biosynthesis; malonyl-CoA from acetyl-CoA: step 1/1. Its function is as follows. Component of the acetyl coenzyme A carboxylase (ACC) complex. First, biotin carboxylase catalyzes the carboxylation of biotin on its carrier protein (BCCP) and then the CO(2) group is transferred by the carboxyltransferase to acetyl-CoA to form malonyl-CoA. The sequence is that of Acetyl-coenzyme A carboxylase carboxyl transferase subunit alpha from Sinorhizobium medicae (strain WSM419) (Ensifer medicae).